The sequence spans 160 residues: Thebaine synthase 2 (160 aa).

Residue S74 coordinates thebaine. The active-site Proton acceptor is the H89. T105 is a binding site for thebaine.

The protein belongs to the MLP family. Homodimer (allosteric) and oligomers. Expressed in poppy latex.

It catalyses the reaction (7S)-O-acetylsalutaridinol = thebaine + acetate + H(+). It participates in alkaloid biosynthesis; morphine biosynthesis. With respect to regulation, slightly inhibited by salutaridine and (7S)-salutaridinol. Functionally, catalyzes the formation of thebaine from (7S)-salutaridinol 7-O-acetate at the expense of labile hydroxylated by-products, which are preferentially produced by spontaneous allylic elimination. No visible activity toward (7S)-salutaridinol (at pH 7). The chain is Thebaine synthase 2 from Papaver somniferum (Opium poppy).